The following is a 276-amino-acid chain: UPF0328 protein ECU01_0090/ECU01_1520/ECU02_1550/ECU08_0020 (276 aa).

Residues 1-24 are disordered; sequence MGIIDVQRSHLTATPSKERDAPAH.

Belongs to the UPF0328 family.

The sequence is that of UPF0328 protein ECU01_0090/ECU01_1520/ECU02_1550/ECU08_0020 from Encephalitozoon cuniculi (strain GB-M1) (Microsporidian parasite).